A 320-amino-acid polypeptide reads, in one-letter code: uncharacterized protein (320 aa).

The tract at residues 196–273 (VVPEYDFDSE…RSKNNSNTTK (78 aa)) is disordered. Over residues 200-210 (YDFDSESESDN) the composition is skewed to acidic residues. The segment covering 211-226 (SEEKRFVPVLETEKAP) has biased composition (basic and acidic residues). Residues 248 to 273 (QPKNPKQTTLKNTLDTRSKNNSNTTK) show a composition bias toward polar residues.

This is an uncharacterized protein from Acanthamoeba polyphaga mimivirus (APMV).